The sequence spans 256 residues: MVALRLIPCLDVSNGRVVKGVNFVGLRDAGDPVELGCRYSKAGADELVFLDITATHEKRSTLVDMVRRTSEAVTIPFTVGGGISSLNGINELLRAGADKVSLNSSAVKDPSLISQGANRFGSQCIVVAIDAKKNKHIPNKWDVYVSGGRKNTGLDAIEWAEKIFEMGAGEILLTSMDGDGTQNGYDIELTRCISEKVSIPVIASGGAGSLSHIKDAFTLGKSSAALLASLLHDGQLTIREIKEYLIKENLPIRPIE.

Residues D11 and D130 contribute to the active site.

The protein belongs to the HisA/HisF family. Heterodimer of HisH and HisF.

The protein localises to the cytoplasm. It carries out the reaction 5-[(5-phospho-1-deoxy-D-ribulos-1-ylimino)methylamino]-1-(5-phospho-beta-D-ribosyl)imidazole-4-carboxamide + L-glutamine = D-erythro-1-(imidazol-4-yl)glycerol 3-phosphate + 5-amino-1-(5-phospho-beta-D-ribosyl)imidazole-4-carboxamide + L-glutamate + H(+). Its pathway is amino-acid biosynthesis; L-histidine biosynthesis; L-histidine from 5-phospho-alpha-D-ribose 1-diphosphate: step 5/9. Its function is as follows. IGPS catalyzes the conversion of PRFAR and glutamine to IGP, AICAR and glutamate. The HisF subunit catalyzes the cyclization activity that produces IGP and AICAR from PRFAR using the ammonia provided by the HisH subunit. The sequence is that of Imidazole glycerol phosphate synthase subunit HisF from Prochlorococcus marinus (strain NATL1A).